Here is an 89-residue protein sequence, read N- to C-terminus: UPF0223 protein BAMEG_4214 (89 aa).

It belongs to the UPF0223 family.

This Bacillus anthracis (strain CDC 684 / NRRL 3495) protein is UPF0223 protein BAMEG_4214.